A 722-amino-acid chain; its full sequence is uncharacterized protein (722 aa).

Catalysis depends on charge relay system residues S575, D658, and H691.

It belongs to the peptidase S9B family.

This is an uncharacterized protein from Rickettsia prowazekii (strain Madrid E).